Reading from the N-terminus, the 80-residue chain is RNA-binding protein Hfq (80 aa).

The region spanning Asp-10–Val-69 is the Sm domain.

It belongs to the Hfq family. In terms of assembly, homohexamer.

RNA chaperone that binds small regulatory RNA (sRNAs) and mRNAs to facilitate mRNA translational regulation in response to envelope stress, environmental stress and changes in metabolite concentrations. Also binds with high specificity to tRNAs. The chain is RNA-binding protein Hfq from Azoarcus sp. (strain BH72).